Consider the following 147-residue polypeptide: Transmembrane protein 210 (147 aa).

An N-terminal signal peptide occupies residues 1 to 31; that stretch reads MAPCPQPESCPAGSPLGLICLSLLLIPASAG. Over 32–47 the chain is Extracellular; it reads TYCECSLGLSREALIA. A helical membrane pass occupies residues 48–68; the sequence is LIVVLAGVSASCFCALVVVAI. Residues 69–147 are Cytoplasmic-facing; the sequence is GVFRAKGDTC…PPPPPPPLPQ (79 aa). The segment at 128-147 is disordered; it reads TMTAPLEPPPPPPPPPPLPQ. The segment covering 133–147 has biased composition (pro residues); the sequence is LEPPPPPPPPPPLPQ.

The protein resides in the membrane. It is found in the cytoplasmic vesicle. It localises to the secretory vesicle. The protein localises to the acrosome. In Mus musculus (Mouse), this protein is Transmembrane protein 210 (Tmem210).